We begin with the raw amino-acid sequence, 324 residues long: NADH-ubiquinone oxidoreductase chain 1 (324 aa).

The next 8 membrane-spanning stretches (helical) occupy residues L9 to I29, F75 to M95, L106 to G126, I146 to Y166, S177 to A197, L228 to F248, E259 to V279, and F299 to G319.

Belongs to the complex I subunit 1 family.

The protein localises to the mitochondrion inner membrane. The catalysed reaction is a ubiquinone + NADH + 5 H(+)(in) = a ubiquinol + NAD(+) + 4 H(+)(out). In terms of biological role, core subunit of the mitochondrial membrane respiratory chain NADH dehydrogenase (Complex I) that is believed to belong to the minimal assembly required for catalysis. Complex I functions in the transfer of electrons from NADH to the respiratory chain. The immediate electron acceptor for the enzyme is believed to be ubiquinone. The chain is NADH-ubiquinone oxidoreductase chain 1 (MT-ND1) from Cyprinus carpio (Common carp).